The primary structure comprises 261 residues: Phosphoadenosine phosphosulfate reductase (261 aa).

This sequence belongs to the PAPS reductase family. CysH subfamily.

It carries out the reaction [thioredoxin]-disulfide + sulfite + adenosine 3',5'-bisphosphate + 2 H(+) = [thioredoxin]-dithiol + 3'-phosphoadenylyl sulfate. It functions in the pathway sulfur metabolism; hydrogen sulfide biosynthesis; sulfite from sulfate: step 3/3. The NADP dependent reduction of PAPS into sulfite involves thioredoxin which probably plays the role of a thiol carrier. The protein is Phosphoadenosine phosphosulfate reductase (MET16) of Saccharomyces cerevisiae (strain ATCC 204508 / S288c) (Baker's yeast).